A 270-amino-acid polypeptide reads, in one-letter code: Putative phosphoenolpyruvate synthase regulatory protein (270 aa).

An ADP-binding site is contributed by 150-157; that stretch reads GVSRCGKT.

The protein belongs to the pyruvate, phosphate/water dikinase regulatory protein family. PSRP subfamily.

The catalysed reaction is [pyruvate, water dikinase] + ADP = [pyruvate, water dikinase]-phosphate + AMP + H(+). The enzyme catalyses [pyruvate, water dikinase]-phosphate + phosphate + H(+) = [pyruvate, water dikinase] + diphosphate. In terms of biological role, bifunctional serine/threonine kinase and phosphorylase involved in the regulation of the phosphoenolpyruvate synthase (PEPS) by catalyzing its phosphorylation/dephosphorylation. The chain is Putative phosphoenolpyruvate synthase regulatory protein from Shewanella baltica (strain OS223).